The primary structure comprises 429 residues: MAQPGTLNLNNEVVKMRKEVKRIRVLVIRKLVRSVGRLKSKKGTEDALLKNQRRAQRLLEEIHAMKELKPDIVTKSALGDDINFEKIFKKPDSTATERAIARLAVHPLLKKKIDVLKAAVQAFKEARQNVAEVESSKNASEDNHSENTLYSNDNGSNLQREATVISEQKVKETKILAKKPIHNSKEKIAKMEHGPKAVTIANSPSKPSEKDSVVSLESQKTPADPKLKTLSQTKKNKGSDSSLSGNSDGGEEFCEEEKEYFDDSTEERFYKQSSMSEDSDSGDDFFIGKVRRTRKKESSCHSSVKEQKPLEKVFLKEDTGETHGDTRNDKIKPSTETRKLESVFFHSLSGSKSSRRNFKEQAPKTRSLDFPQNEPQIKNQFNKKLSGRLENTKQQLQLPLHPSWEASRRRKEQQSNIAVFQGKKITFDD.

An N-acetylalanine modification is found at Ala-2. 2 coiled-coil regions span residues 42-67 (KGTE…AMKE) and 108-146 (LLKK…NHSE). Disordered stretches follow at residues 131 to 157 (AEVE…NGSN) and 176 to 429 (LAKK…TFDD). Over residues 146–157 (ENTLYSNDNGSN) the composition is skewed to polar residues. The span at 183–195 (NSKEKIAKMEHGP) shows a compositional bias: basic and acidic residues. A Glycyl lysine isopeptide (Lys-Gly) (interchain with G-Cter in SUMO2) cross-link involves residue Lys-190. 5 positions are modified to phosphoserine: Ser-203, Ser-205, Ser-264, Ser-279, and Ser-281. Over residues 249–265 (GGEEFCEEEKEYFDDST) the composition is skewed to acidic residues. Positions 296-341 (KESSCHSSVKEQKPLEKVFLKEDTGETHGDTRNDKIKPSTETRKLE) are enriched in basic and acidic residues. Residue Lys-316 forms a Glycyl lysine isopeptide (Lys-Gly) (interchain with G-Cter in SUMO2) linkage. Residues Ser-349, Ser-351, and Ser-367 each carry the phosphoserine modification. A compositionally biased stretch (basic and acidic residues) spans 357-367 (NFKEQAPKTRS). A compositionally biased stretch (polar residues) spans 373-383 (NEPQIKNQFNK).

As to quaternary structure, interacts with SRF. Forms complexes with SRF and SRF cofactors ARID2, MYOCD and NKX2-5. Interacts with the N-terminus of SLC2A4. As to expression, abundantly expressed in heart and skeletal muscle, and at much lower levels in brain and lung.

Its subcellular location is the cytoplasm. The protein localises to the perinuclear region. Functionally, may be involved in regulating transcriptional activation of cardiac genes during the aging process. May play a role in biosynthesis and/or processing of SLC2A4 in adipose cells. This chain is Serum response factor-binding protein 1, found in Homo sapiens (Human).